A 380-amino-acid chain; its full sequence is 3-methylitaconate isomerase (380 aa).

This sequence belongs to the PrpF family. In terms of assembly, homotetramer.

It catalyses the reaction 2-methylene-3-methylsuccinate = dimethylmaleate. It participates in cofactor degradation; nicotinate degradation; propanoate and pyruvate from 6-hydroxynicotinate: step 6/8. Inhibited by oxidized glutathione, p-chloromercuriphenylsulfonic acid and iodoacetic acid. Not inhibited by the chelating agent alpha,alpha-dipyridyl. Activity is slightly increased by EDTA. Not activated by Fe(2+), Mg(2+), Mn(2+) or Ca(2+). Unaffected by K(+), Na(+), NH4(+), Rb(+) or Li(+). Its function is as follows. Catalyzes the reversible isomerization of (R)-3-methylitaconate to 2,3-dimethylmaleate. Has very low isomerase activity with itaconate. The protein is 3-methylitaconate isomerase (mii) of Eubacterium barkeri (Clostridium barkeri).